A 136-amino-acid chain; its full sequence is Probable S-adenosyl-L-methionine-binding protein PH1056 (136 aa).

The region spanning 8-126 is the TsaA-like domain; that stretch reads IVPVGYIRKE…FPERYDCPKE (119 aa). S-adenosyl-L-methionine is bound by residues 48 to 49, Arg-78, and 106 to 109; these read HK and EDGT.

This sequence belongs to the tRNA methyltransferase O family.

In Pyrococcus horikoshii (strain ATCC 700860 / DSM 12428 / JCM 9974 / NBRC 100139 / OT-3), this protein is Probable S-adenosyl-L-methionine-binding protein PH1056.